The primary structure comprises 737 residues: Relaxin receptor 2 (737 aa).

Topologically, residues 1 to 399 (MFPLLHFIVL…SSFEDLLANN (399 aa)) are extracellular. The region spanning 27-64 (LCQKGYFPCGNLTKCLPRAFHCDGVDDCGNGADEDNCG) is the LDL-receptor class A domain. Disulfide bonds link Cys-28/Cys-41, Cys-35/Cys-54, and Cys-48/Cys-63. Asn-37 carries an N-linked (GlcNAc...) asparagine glycan. Asn-121 carries an N-linked (GlcNAc...) asparagine glycan. 10 LRR repeats span residues 121–142 (NTTL…VFTK), 145–166 (QLKQ…AFFG), 169–190 (NLQI…VFKD), 193–214 (QLTW…LFTG), 217–238 (SLFF…MCAQ), 241–262 (QLNW…SFLS), 265–286 (SLTV…TFSS), 289–310 (NLGE…IFKD), 313–334 (LLQK…QFES), and 337–358 (QLQS…MFQP). N-linked (GlcNAc...) asparagine glycosylation is present at Asn-257. An N-linked (GlcNAc...) asparagine glycan is attached at Asn-318. N-linked (GlcNAc...) asparagine glycosylation occurs at Asn-361. Residues 400-420 (ILRIFVWVIAFITCFGNLFVI) form a helical membrane-spanning segment. The Cytoplasmic portion of the chain corresponds to 421–438 (GMRSFIKAENTTHATSIK). A helical membrane pass occupies residues 439 to 459 (ILCCADCLMGVYLFFIGFFDI). The Extracellular segment spans residues 460–478 (KYRGQYQKYALLWMESLQC). Cys-478 and Cys-556 are joined by a disulfide. Residues 479-501 (RLMGFLAMLSTEVSVLLLTYLTL) traverse the membrane as a helical segment. Residues 502 to 520 (EKFLAIVFPFSNIRPGKWQ) are Cytoplasmic-facing. A helical transmembrane segment spans residues 521–541 (TMVILICIWIVGFLIAVIPFW). Residues 542–575 (KEDYFGNFYGKNGVCFPLYYDQTEDIGSKGYSLG) are Extracellular-facing. A helical transmembrane segment spans residues 576-596 (IFLGVNLLAFLIIVFSYTIMF). Residues 597–622 (CSIKKTALQTSEVRNPIGREVAVANR) are Cytoplasmic-facing. A helical transmembrane segment spans residues 623 to 643 (FFFIVFSDAICWIPVFVIKIL). At 644 to 653 (SLFRVEIPGT) the chain is on the extracellular side. Residues 654-674 (ITSWIVIFFLPVNSALNPILY) form a helical membrane-spanning segment. Topologically, residues 675 to 737 (TLTTSFFKDK…LGDSIVKPIS (63 aa)) are cytoplasmic.

The protein belongs to the G-protein coupled receptor 1 family.

Its subcellular location is the cell membrane. In terms of biological role, receptor for relaxin. The activity of this receptor is mediated by G proteins leading to stimulation of adenylate cyclase and an increase of cAMP. May also be a receptor for Leydig insulin-like peptide (INSL3). The chain is Relaxin receptor 2 (RXFP2) from Canis lupus familiaris (Dog).